Here is a 496-residue protein sequence, read N- to C-terminus: Sugar transporter ERD6 (496 aa).

6 helical membrane-spanning segments follow: residues 58–78 (VFLSTFVAVSGSFCTGCGVGF), 94–114 (VAEYSMFGSILTLGGLIGAVF), 128–148 (MLFCEFFCITGWLCVALAQNA), 156–176 (LLLGIGVGIFSYVIPVYIAEI), 183–203 (GSFVFANQLMQNCGISLFFII), and 211–231 (LLTVVGLVPCVFHVFCLFFIP). At Ser-256 the chain carries Phosphoserine. 6 consecutive transmembrane segments (helical) span residues 292–312 (YPLIIGVGLMFLQQLCGSSGV), 329–349 (IGTSVIATIMVPKAMLATVLV), 364–384 (AMGLSALLLSVSYGFQSFGIL), 394–414 (IGVLGHIVSFAMGMGGLPWII), 430–450 (LVTVTNWLFGWIITYTFNFML), and 456–476 (GMFLIFSMVSASSIVFIYFLV).

Belongs to the major facilitator superfamily. Sugar transporter (TC 2.A.1.1) family. Expressed in both shoots and roots. In roots, expressed in epidermal cells and especially strongly in cortex cells. In flowers, expressed in sepals.

Its subcellular location is the membrane. Sugar transporter. The protein is Sugar transporter ERD6 (ERD6) of Arabidopsis thaliana (Mouse-ear cress).